We begin with the raw amino-acid sequence, 235 residues long: Urease accessory protein UreF (235 aa).

This sequence belongs to the UreF family. In terms of assembly, ureD, UreF and UreG form a complex that acts as a GTP-hydrolysis-dependent molecular chaperone, activating the urease apoprotein by helping to assemble the nickel containing metallocenter of UreC. The UreE protein probably delivers the nickel.

It is found in the cytoplasm. In terms of biological role, required for maturation of urease via the functional incorporation of the urease nickel metallocenter. The polypeptide is Urease accessory protein UreF (Haemophilus influenzae (strain 86-028NP)).